The chain runs to 311 residues: Pyrimidine-specific ribonucleoside hydrolase RihA (311 aa).

The active site involves H240.

The protein belongs to the IUNH family. RihA subfamily.

Hydrolyzes with equal efficiency cytidine or uridine to ribose and cytosine or uracil, respectively. The protein is Pyrimidine-specific ribonucleoside hydrolase RihA of Escherichia coli O9:H4 (strain HS).